Here is a 273-residue protein sequence, read N- to C-terminus: F-actin-capping protein subunit alpha (273 aa).

This sequence belongs to the F-actin-capping protein alpha subunit family. In terms of assembly, component of the F-actin capping complex, composed of a heterodimer of an alpha and a beta subunit.

The protein localises to the cytoplasm. It is found in the cytoskeleton. It localises to the actin patch. Its function is as follows. F-actin-capping proteins bind in a Ca(2+)-independent manner to the fast growing ends of actin filaments (barbed end) thereby blocking the exchange of subunits at these ends. Unlike other capping proteins (such as gelsolin and severin), these proteins do not sever actin filaments. The sequence is that of F-actin-capping protein subunit alpha (cap1) from Aspergillus oryzae (strain ATCC 42149 / RIB 40) (Yellow koji mold).